Here is a 210-residue protein sequence, read N- to C-terminus: Uracil phosphoribosyltransferase (210 aa).

Residues Arg-80, Arg-105, and 132–140 contribute to the 5-phospho-alpha-D-ribose 1-diphosphate site; that span reads DPMLATGGS. Uracil-binding positions include Ile-195 and 200–202; that span reads GDA. Asp-201 contacts 5-phospho-alpha-D-ribose 1-diphosphate.

This sequence belongs to the UPRTase family. It depends on Mg(2+) as a cofactor.

The catalysed reaction is UMP + diphosphate = 5-phospho-alpha-D-ribose 1-diphosphate + uracil. The protein operates within pyrimidine metabolism; UMP biosynthesis via salvage pathway; UMP from uracil: step 1/1. With respect to regulation, allosterically activated by GTP. Catalyzes the conversion of uracil and 5-phospho-alpha-D-ribose 1-diphosphate (PRPP) to UMP and diphosphate. This Thermoanaerobacter pseudethanolicus (strain ATCC 33223 / 39E) (Clostridium thermohydrosulfuricum) protein is Uracil phosphoribosyltransferase.